Here is a 142-residue protein sequence, read N- to C-terminus: Probable inactive dual specificity protein phosphatase-like At4g18593 (142 aa).

It belongs to the protein-tyrosine phosphatase family. Non-receptor class dual specificity subfamily.

The chain is Probable inactive dual specificity protein phosphatase-like At4g18593 from Arabidopsis thaliana (Mouse-ear cress).